A 363-amino-acid chain; its full sequence is Ribonuclease D (363 aa).

The 3'-5' exonuclease domain occupies 5–168 (ITHPSELTDR…AIHDELTRRL (164 aa)). The HRDC domain occupies 208 to 288 (EPAAQRRLLR…NTPLPDEEHA (81 aa)).

Belongs to the RNase D family. A divalent metal cation is required as a cofactor.

Its subcellular location is the cytoplasm. The catalysed reaction is Exonucleolytic cleavage that removes extra residues from the 3'-terminus of tRNA to produce 5'-mononucleotides.. Its function is as follows. Exonuclease involved in the 3' processing of various precursor tRNAs. Initiates hydrolysis at the 3'-terminus of an RNA molecule and releases 5'-mononucleotides. The protein is Ribonuclease D of Xanthomonas oryzae pv. oryzae (strain KACC10331 / KXO85).